The following is a 384-amino-acid chain: tRNA(Met) cytidine acetate ligase (384 aa).

ATP contacts are provided by residues 7 to 20, G101, N153, and R178; that span reads VAEY…HEFL.

The protein belongs to the TmcAL family.

Its subcellular location is the cytoplasm. The catalysed reaction is cytidine(34) in elongator tRNA(Met) + acetate + ATP = N(4)-acetylcytidine(34) in elongator tRNA(Met) + AMP + diphosphate. Its function is as follows. Catalyzes the formation of N(4)-acetylcytidine (ac(4)C) at the wobble position of elongator tRNA(Met), using acetate and ATP as substrates. First activates an acetate ion to form acetyladenylate (Ac-AMP) and then transfers the acetyl group to tRNA to form ac(4)C34. This is tRNA(Met) cytidine acetate ligase from Lactobacillus delbrueckii subsp. bulgaricus (strain ATCC 11842 / DSM 20081 / BCRC 10696 / JCM 1002 / NBRC 13953 / NCIMB 11778 / NCTC 12712 / WDCM 00102 / Lb 14).